Consider the following 255-residue polypeptide: Small ribosomal subunit protein uS2 (255 aa).

The protein belongs to the universal ribosomal protein uS2 family.

The polypeptide is Small ribosomal subunit protein uS2 (Geotalea daltonii (strain DSM 22248 / JCM 15807 / FRC-32) (Geobacter daltonii)).